We begin with the raw amino-acid sequence, 115 residues long: T cell receptor beta variable 12-5 (115 aa).

An N-terminal signal peptide occupies residues Met-1–Ala-21. The region spanning Arg-22–Leu-115 is the Ig-like domain. A disulfide bridge links Cys-42 with Cys-111.

As to quaternary structure, alpha-beta TR is a heterodimer composed of an alpha and beta chain; disulfide-linked. The alpha-beta TR is associated with the transmembrane signaling CD3 coreceptor proteins to form the TR-CD3 (TcR or TCR). The assembly of alpha-beta TR heterodimers with CD3 occurs in the endoplasmic reticulum where a single alpha-beta TR heterodimer associates with one CD3D-CD3E heterodimer, one CD3G-CD3E heterodimer and one CD247 homodimer forming a stable octameric structure. CD3D-CD3E and CD3G-CD3E heterodimers preferentially associate with TR alpha and TR beta chains, respectively. The association of the CD247 homodimer is the last step of TcR assembly in the endoplasmic reticulum and is required for transport to the cell surface.

It localises to the cell membrane. V region of the variable domain of T cell receptor (TR) beta chain that participates in the antigen recognition. Alpha-beta T cell receptors are antigen specific receptors which are essential to the immune response and are present on the cell surface of T lymphocytes. Recognize peptide-major histocompatibility (MH) (pMH) complexes that are displayed by antigen presenting cells (APC), a prerequisite for efficient T cell adaptive immunity against pathogens. Binding of alpha-beta TR to pMH complex initiates TR-CD3 clustering on the cell surface and intracellular activation of LCK that phosphorylates the ITAM motifs of CD3G, CD3D, CD3E and CD247 enabling the recruitment of ZAP70. In turn ZAP70 phosphorylates LAT, which recruits numerous signaling molecules to form the LAT signalosome. The LAT signalosome propagates signal branching to three major signaling pathways, the calcium, the mitogen-activated protein kinase (MAPK) kinase and the nuclear factor NF-kappa-B (NF-kB) pathways, leading to the mobilization of transcription factors that are critical for gene expression and essential for T cell growth and differentiation. The T cell repertoire is generated in the thymus, by V-(D)-J rearrangement. This repertoire is then shaped by intrathymic selection events to generate a peripheral T cell pool of self-MH restricted, non-autoaggressive T cells. Post-thymic interaction of alpha-beta TR with the pMH complexes shapes TR structural and functional avidity. The protein is T cell receptor beta variable 12-5 of Homo sapiens (Human).